The following is a 250-amino-acid chain: 4-hydroxy-tetrahydrodipicolinate reductase (250 aa).

Residues 10-15 (GVKGRI), 78-80 (GTT), and 105-108 (APNF) contribute to the NAD(+) site. His135 serves as the catalytic Proton donor/acceptor. His136 lines the (S)-2,3,4,5-tetrahydrodipicolinate pocket. The active-site Proton donor is Lys139. 145-146 (GT) is a (S)-2,3,4,5-tetrahydrodipicolinate binding site.

This sequence belongs to the DapB family.

It is found in the cytoplasm. The enzyme catalyses (S)-2,3,4,5-tetrahydrodipicolinate + NAD(+) + H2O = (2S,4S)-4-hydroxy-2,3,4,5-tetrahydrodipicolinate + NADH + H(+). It catalyses the reaction (S)-2,3,4,5-tetrahydrodipicolinate + NADP(+) + H2O = (2S,4S)-4-hydroxy-2,3,4,5-tetrahydrodipicolinate + NADPH + H(+). Its pathway is amino-acid biosynthesis; L-lysine biosynthesis via DAP pathway; (S)-tetrahydrodipicolinate from L-aspartate: step 4/4. In terms of biological role, catalyzes the conversion of 4-hydroxy-tetrahydrodipicolinate (HTPA) to tetrahydrodipicolinate. The chain is 4-hydroxy-tetrahydrodipicolinate reductase from Streptomyces avermitilis (strain ATCC 31267 / DSM 46492 / JCM 5070 / NBRC 14893 / NCIMB 12804 / NRRL 8165 / MA-4680).